A 46-amino-acid polypeptide reads, in one-letter code: Large ribosomal subunit protein bL36 (46 aa).

It belongs to the bacterial ribosomal protein bL36 family.

This Photorhabdus laumondii subsp. laumondii (strain DSM 15139 / CIP 105565 / TT01) (Photorhabdus luminescens subsp. laumondii) protein is Large ribosomal subunit protein bL36.